Here is a 327-residue protein sequence, read N- to C-terminus: GMP reductase (327 aa).

The Thioimidate intermediate role is filled by Cys-176. Residue 205 to 228 coordinates NADP(+); sequence IIADGGIRTHGDIAKSIRFGATMV.

This sequence belongs to the IMPDH/GMPR family. GuaC type 2 subfamily.

The enzyme catalyses IMP + NH4(+) + NADP(+) = GMP + NADPH + 2 H(+). Catalyzes the irreversible NADPH-dependent deamination of GMP to IMP. It functions in the conversion of nucleobase, nucleoside and nucleotide derivatives of G to A nucleotides, and in maintaining the intracellular balance of A and G nucleotides. The protein is GMP reductase of Streptococcus equi subsp. equi (strain 4047).